The chain runs to 338 residues: D-erythrose-4-phosphate dehydrogenase (338 aa).

Arg12 to Ile13 serves as a coordination point for NAD(+). Substrate contacts are provided by residues Ser154 to Thr156, Arg200, Thr213 to Lys214, and Arg236. Residue Cys155 is the Nucleophile of the active site. Asn318 serves as a coordination point for NAD(+).

The protein belongs to the glyceraldehyde-3-phosphate dehydrogenase family. Epd subfamily. As to quaternary structure, homotetramer.

The protein localises to the cytoplasm. It catalyses the reaction D-erythrose 4-phosphate + NAD(+) + H2O = 4-phospho-D-erythronate + NADH + 2 H(+). Its pathway is cofactor biosynthesis; pyridoxine 5'-phosphate biosynthesis; pyridoxine 5'-phosphate from D-erythrose 4-phosphate: step 1/5. Functionally, catalyzes the NAD-dependent conversion of D-erythrose 4-phosphate to 4-phosphoerythronate. In Yersinia pestis bv. Antiqua (strain Antiqua), this protein is D-erythrose-4-phosphate dehydrogenase.